The chain runs to 782 residues: Isoamylase 3, chloroplastic (782 aa).

A chloroplast-targeting transit peptide spans 1–68 (MDSIGINRAP…EKVRRFDSVR (68 aa)). The segment covering 68 to 81 (RSTTARAQNGNAGR) has biased composition (polar residues). The interval 68–88 (RSTTARAQNGNAGRSMTEERG) is disordered. Residue Asp445 is the Nucleophile of the active site. The Proton donor role is filled by Glu482.

The protein belongs to the glycosyl hydrolase 13 family. As to expression, expressed in leaves. Expressed at low levels in developing endosperm.

It is found in the plastid. Its subcellular location is the chloroplast. The protein resides in the amyloplast. It catalyses the reaction Hydrolysis of (1-&gt;6)-alpha-D-glucosidic branch linkages in glycogen, amylopectin and their beta-limit dextrins.. Starch-debranching enzyme that plays a role in the degradation of transitory starch during the night in leaf blades, facilitates the formation of spherical amyloplasts containing compound granules in the endosperm, and affects morphological characteristics of plastids. The polypeptide is Isoamylase 3, chloroplastic (Oryza sativa subsp. japonica (Rice)).